Consider the following 188-residue polypeptide: ATP synthase subunit b 1 (188 aa).

A helical transmembrane segment spans residues 35 to 55 (VHFSSHFFWLAISFGFFYLFI).

This sequence belongs to the ATPase B chain family. F-type ATPases have 2 components, F(1) - the catalytic core - and F(0) - the membrane proton channel. F(1) has five subunits: alpha(3), beta(3), gamma(1), delta(1), epsilon(1). F(0) has three main subunits: a(1), b(2) and c(10-14). The alpha and beta chains form an alternating ring which encloses part of the gamma chain. F(1) is attached to F(0) by a central stalk formed by the gamma and epsilon chains, while a peripheral stalk is formed by the delta and b chains.

The protein localises to the cell inner membrane. F(1)F(0) ATP synthase produces ATP from ADP in the presence of a proton or sodium gradient. F-type ATPases consist of two structural domains, F(1) containing the extramembraneous catalytic core and F(0) containing the membrane proton channel, linked together by a central stalk and a peripheral stalk. During catalysis, ATP synthesis in the catalytic domain of F(1) is coupled via a rotary mechanism of the central stalk subunits to proton translocation. Functionally, component of the F(0) channel, it forms part of the peripheral stalk, linking F(1) to F(0). The polypeptide is ATP synthase subunit b 1 (Bartonella tribocorum (strain CIP 105476 / IBS 506)).